The sequence spans 127 residues: Small ribosomal subunit protein uS13 (127 aa).

The tract at residues 97–127 is disordered; that stretch reads PVRGQRTRTNARTRRGGRKTVAGKKKAAAKK. The segment covering 101 to 127 has biased composition (basic residues); that stretch reads QRTRTNARTRRGGRKTVAGKKKAAAKK.

This sequence belongs to the universal ribosomal protein uS13 family. Part of the 30S ribosomal subunit. Forms a loose heterodimer with protein S19. Forms two bridges to the 50S subunit in the 70S ribosome.

Its function is as follows. Located at the top of the head of the 30S subunit, it contacts several helices of the 16S rRNA. In the 70S ribosome it contacts the 23S rRNA (bridge B1a) and protein L5 of the 50S subunit (bridge B1b), connecting the 2 subunits; these bridges are implicated in subunit movement. Contacts the tRNAs in the A and P-sites. The protein is Small ribosomal subunit protein uS13 of Gloeobacter violaceus (strain ATCC 29082 / PCC 7421).